Here is a 337-residue protein sequence, read N- to C-terminus: Phosphate acyltransferase (337 aa).

This sequence belongs to the PlsX family. In terms of assembly, homodimer. Probably interacts with PlsY.

It localises to the cytoplasm. It carries out the reaction a fatty acyl-[ACP] + phosphate = an acyl phosphate + holo-[ACP]. It participates in lipid metabolism; phospholipid metabolism. In terms of biological role, catalyzes the reversible formation of acyl-phosphate (acyl-PO(4)) from acyl-[acyl-carrier-protein] (acyl-ACP). This enzyme utilizes acyl-ACP as fatty acyl donor, but not acyl-CoA. This is Phosphate acyltransferase from Ehrlichia canis (strain Jake).